A 559-amino-acid polypeptide reads, in one-letter code: Coiled-coil domain-containing protein 63 (559 aa).

Coiled-coil stretches lie at residues 14–70, 185–261, and 364–414; these read ELSE…QAET, EKAA…KLKS, and QQQS…VEKL.

In terms of biological role, plays a role in spermiogenesis. Involved in the elongation of flagella and the formation of sperm heads. This is Coiled-coil domain-containing protein 63 from Rattus norvegicus (Rat).